We begin with the raw amino-acid sequence, 168 residues long: Segregation and condensation protein B (168 aa).

Belongs to the ScpB family. Homodimer. Homodimerization may be required to stabilize the binding of ScpA to the Smc head domains. Component of a cohesin-like complex composed of ScpA, ScpB and the Smc homodimer, in which ScpA and ScpB bind to the head domain of Smc. The presence of the three proteins is required for the association of the complex with DNA.

Its subcellular location is the cytoplasm. Functionally, participates in chromosomal partition during cell division. May act via the formation of a condensin-like complex containing Smc and ScpA that pull DNA away from mid-cell into both cell halves. The sequence is that of Segregation and condensation protein B from Caldanaerobacter subterraneus subsp. tengcongensis (strain DSM 15242 / JCM 11007 / NBRC 100824 / MB4) (Thermoanaerobacter tengcongensis).